We begin with the raw amino-acid sequence, 297 residues long: tRNA pseudouridine synthase B (297 aa).

Asp-44 (nucleophile) is an active-site residue.

This sequence belongs to the pseudouridine synthase TruB family. Type 1 subfamily.

The catalysed reaction is uridine(55) in tRNA = pseudouridine(55) in tRNA. Responsible for synthesis of pseudouridine from uracil-55 in the psi GC loop of transfer RNAs. In Corynebacterium glutamicum (strain R), this protein is tRNA pseudouridine synthase B.